A 369-amino-acid chain; its full sequence is Histidinol-phosphate aminotransferase 2 (369 aa).

At Lys-231 the chain carries N6-(pyridoxal phosphate)lysine.

Belongs to the class-II pyridoxal-phosphate-dependent aminotransferase family. Histidinol-phosphate aminotransferase subfamily. Homodimer. Pyridoxal 5'-phosphate serves as cofactor.

The enzyme catalyses L-histidinol phosphate + 2-oxoglutarate = 3-(imidazol-4-yl)-2-oxopropyl phosphate + L-glutamate. Its pathway is amino-acid biosynthesis; L-histidine biosynthesis; L-histidine from 5-phospho-alpha-D-ribose 1-diphosphate: step 7/9. The protein is Histidinol-phosphate aminotransferase 2 of Legionella pneumophila subsp. pneumophila (strain Philadelphia 1 / ATCC 33152 / DSM 7513).